We begin with the raw amino-acid sequence, 218 residues long: Small ribosomal subunit protein uS3c (218 aa).

The KH type-2 domain maps to 47-118 (VQKNIRISSG…KLNIAITRIS (72 aa)).

The protein belongs to the universal ribosomal protein uS3 family. As to quaternary structure, part of the 30S ribosomal subunit.

The protein resides in the plastid. It is found in the chloroplast. The protein is Small ribosomal subunit protein uS3c (rps3) of Lepidium virginicum (Virginia pepperweed).